A 266-amino-acid chain; its full sequence is MLELRLVQGSLLKKVLESIKELVNDANFDCSSTGFSLQAMDSSHVALVALLLRSEGFEHYRCDRNLSMGMNLNNMAKMLKCAGNDDIITIKADDGSDTVTFMFESPTQDKISDFEMKLMDIDSEHLGIPEAEYHAIVRMPSAEFARICKDLSSIGDTVVIAVSKEGVKFSTKGDIGSANIVCRQNTTVDKPEEATVIEMNEPVALQFALRYMNSFTKATPLSSSVTISLSNELPVVVEYKIAEMGYVRFYLAPKIEEDEEETKPQA.

A DNA-binding region spans residues Arg-61 to Lys-80.

Belongs to the PCNA family.

Its subcellular location is the nucleus. Its function is as follows. This protein is an auxiliary protein of DNA polymerase delta and is involved in the control of eukaryotic DNA replication by increasing the polymerase's processibility during elongation of the leading strand. The chain is Proliferating cell nuclear antigen (PCNA) from Pisum sativum (Garden pea).